The sequence spans 368 residues: Phospho-N-acetylmuramoyl-pentapeptide-transferase (368 aa).

10 consecutive transmembrane segments (helical) span residues 2 to 22 (IALI…TPLL), 51 to 71 (TLGG…SALY), 80 to 100 (PTWA…LGFI), 116 to 136 (VGGK…LALI), 166 to 186 (IVAI…WTNA), 193 to 213 (LDGL…IIAM), 234 to 254 (PLDL…FLWY), 256 to 276 (CNPA…GLFA), 277 to 297 (ALSI…LFVV), and 340 to 360 (FWIV…GNWV).

This sequence belongs to the glycosyltransferase 4 family. MraY subfamily. Mg(2+) is required as a cofactor.

The protein localises to the cell membrane. The enzyme catalyses UDP-N-acetyl-alpha-D-muramoyl-L-alanyl-gamma-D-glutamyl-meso-2,6-diaminopimeloyl-D-alanyl-D-alanine + di-trans,octa-cis-undecaprenyl phosphate = di-trans,octa-cis-undecaprenyl diphospho-N-acetyl-alpha-D-muramoyl-L-alanyl-D-glutamyl-meso-2,6-diaminopimeloyl-D-alanyl-D-alanine + UMP. It functions in the pathway cell wall biogenesis; peptidoglycan biosynthesis. Catalyzes the initial step of the lipid cycle reactions in the biosynthesis of the cell wall peptidoglycan: transfers peptidoglycan precursor phospho-MurNAc-pentapeptide from UDP-MurNAc-pentapeptide onto the lipid carrier undecaprenyl phosphate, yielding undecaprenyl-pyrophosphoryl-MurNAc-pentapeptide, known as lipid I. The chain is Phospho-N-acetylmuramoyl-pentapeptide-transferase from Bifidobacterium animalis subsp. lactis (strain AD011).